The primary structure comprises 409 residues: Putative actin-fragmin kinase DDB_G0268812 (409 aa).

The segment at 1–45 (MKTFRDFKKKIKNNNNNKNNKNNNINNNNSNNNKNNKNNNNNNSN) is disordered. A coiled-coil region spans residues 5-46 (RDFKKKIKNNNNNKNNKNNNINNNNSNNNKNNKNNNNNNSNN). Residues 13–45 (NNNNNKNNKNNNINNNNSNNNKNNKNNNNNNSN) are compositionally biased toward low complexity.

This sequence belongs to the protein kinase superfamily. AFK Ser/Thr protein kinase family.

The polypeptide is Putative actin-fragmin kinase DDB_G0268812 (Dictyostelium discoideum (Social amoeba)).